The following is a 462-amino-acid chain: UDP-N-acetylmuramoylalanine--D-glutamate ligase (462 aa).

120–126 (GTNGKTT) serves as a coordination point for ATP.

The protein belongs to the MurCDEF family.

The protein resides in the cytoplasm. The enzyme catalyses UDP-N-acetyl-alpha-D-muramoyl-L-alanine + D-glutamate + ATP = UDP-N-acetyl-alpha-D-muramoyl-L-alanyl-D-glutamate + ADP + phosphate + H(+). The protein operates within cell wall biogenesis; peptidoglycan biosynthesis. Cell wall formation. Catalyzes the addition of glutamate to the nucleotide precursor UDP-N-acetylmuramoyl-L-alanine (UMA). This Bdellovibrio bacteriovorus (strain ATCC 15356 / DSM 50701 / NCIMB 9529 / HD100) protein is UDP-N-acetylmuramoylalanine--D-glutamate ligase.